The sequence spans 510 residues: NAD(P)H-quinone oxidoreductase subunit 2, chloroplastic (510 aa).

A run of 11 helical transmembrane segments spans residues 24–44, 59–79, 99–119, 124–144, 149–169, 183–203, 295–315, 323–343, 347–367, 395–415, and 418–438; these read LLLFHGSFIFPECILIFGLIL, WFYFISSTSLVMSITALLFRW, IFQFLILLCSTLCIPLSVEYI, MAITEFLLFVLTATLGGMFLC, LITIFVAPECFSLCSYLLSGY, YLLMGGASSSILVHGFSWLYG, WHLLLEILAILSMILGNLIAI, MLAYSSIGQIGYVIIGIIVGD, GYASMITYMLFYISMNLGTFA, ALSSALCLLSLGGLPPLAGFF, and LHLFWCGWQAGLYFLVSIGLL.

Belongs to the complex I subunit 2 family. In terms of assembly, NDH is composed of at least 16 different subunits, 5 of which are encoded in the nucleus.

It is found in the plastid. The protein resides in the chloroplast thylakoid membrane. It catalyses the reaction a plastoquinone + NADH + (n+1) H(+)(in) = a plastoquinol + NAD(+) + n H(+)(out). The catalysed reaction is a plastoquinone + NADPH + (n+1) H(+)(in) = a plastoquinol + NADP(+) + n H(+)(out). NDH shuttles electrons from NAD(P)H:plastoquinone, via FMN and iron-sulfur (Fe-S) centers, to quinones in the photosynthetic chain and possibly in a chloroplast respiratory chain. The immediate electron acceptor for the enzyme in this species is believed to be plastoquinone. Couples the redox reaction to proton translocation, and thus conserves the redox energy in a proton gradient. This is NAD(P)H-quinone oxidoreductase subunit 2, chloroplastic from Maianthemum racemosum (False Solomon's-seal).